Here is a 272-residue protein sequence, read N- to C-terminus: 2-amino-3,7-dideoxy-D-threo-hept-6-ulosonate synthase (272 aa).

Asp-33 serves as the catalytic Proton acceptor. 1-deoxy-D-threo-hexo-2,5-diulose 6-phosphate-binding positions include 33–37 and 153–155; these read DHGVS and YPR. The active-site Proton donor is the Tyr-153. Lys-184 functions as the Schiff-base intermediate with substrate in the catalytic mechanism. Residues 209–210 and 237–238 each bind 1-deoxy-D-threo-hexo-2,5-diulose 6-phosphate; these read GG and GR.

It belongs to the DeoC/FbaB aldolase family. ADHS subfamily. In terms of assembly, homodecamer.

It carries out the reaction 1-deoxy-D-threo-hexo-2,5-diulose 6-phosphate + L-aspartate 4-semialdehyde = 2,3-dioxopropyl phosphate + 2-amino-2,3,7-trideoxy-D-lyxo-hept-6-ulosonate. Catalyzes a transaldol reaction between 6-deoxy-5-ketofructose 1-phosphate (DKFP) and L-aspartate semialdehyde (ASA) with an elimination of hydroxypyruvaldehyde phosphate to yield 2-amino-3,7-dideoxy-D-threo-hept-6-ulosonate (ADH). Plays a key role in an alternative pathway of the biosynthesis of 3-dehydroquinate (DHQ), which is involved in the canonical pathway for the biosynthesis of aromatic amino acids. The sequence is that of 2-amino-3,7-dideoxy-D-threo-hept-6-ulosonate synthase from Methanococcus maripaludis (strain C7 / ATCC BAA-1331).